Here is a 1018-residue protein sequence, read N- to C-terminus: Importin-9 (1018 aa).

An Importin N-terminal domain is found at 35–114; sequence TEKRIKQLEY…RNILPNGLYD (80 aa). The interval 921 to 950 is disordered; it reads GKSDEPLTDSEEDGDDEDAPGNPDKPRYIS. Positions 926 to 939 are enriched in acidic residues; sequence PLTDSEEDGDDEDA.

The protein belongs to the importin beta family.

It is found in the cytoplasm. The protein localises to the nucleus. In terms of biological role, nuclear transport receptor that mediates nuclear import of proteins. Serves as receptor for nuclear localization signals (NLS) in cargo substrates. Is thought to mediate docking of the importin/substrate complex to the nuclear pore complex (NPC) through binding to nucleoporin and the complex is subsequently translocated through the pore by an energy requiring, Ran-dependent mechanism. Mediates the import of pre-assembled proteasomes into the nucleus during the late stages of sperm development. The chain is Importin-9 from Drosophila melanogaster (Fruit fly).